We begin with the raw amino-acid sequence, 268 residues long: Stomatin homolog PYRAB06580 (268 aa).

A helical transmembrane segment spans residues 1–21 (MILPTNFFVTTIILLFILIFL). Coiled coils occupy residues 125–152 (GQAHLDELLSERDKLNMQLQRIIDEATD) and 178–213 (KQAEAERERRARITLAEAERQAAEKLREAAEIISEH).

This sequence belongs to the band 7/mec-2 family. As to quaternary structure, homotrimer.

The protein localises to the membrane. The protein is Stomatin homolog PYRAB06580 of Pyrococcus abyssi (strain GE5 / Orsay).